A 152-amino-acid chain; its full sequence is UPF0311 protein blr7842 (152 aa).

This sequence belongs to the UPF0311 family.

The sequence is that of UPF0311 protein blr7842 from Bradyrhizobium diazoefficiens (strain JCM 10833 / BCRC 13528 / IAM 13628 / NBRC 14792 / USDA 110).